The following is a 763-amino-acid chain: Phosphoglycerol transferase I (763 aa).

Helical transmembrane passes span 4–19 (LLSF…IYAW), 26–48 (WWFA…LFAS), 76–98 (YILP…GWIL), and 105–127 (PHHF…ASPA).

The protein belongs to the OpgB family.

Its subcellular location is the cell inner membrane. The catalysed reaction is a phosphatidylglycerol + a membrane-derived-oligosaccharide D-glucose = a 1,2-diacyl-sn-glycerol + a membrane-derived-oligosaccharide 6-(glycerophospho)-D-glucose.. Its pathway is glycan metabolism; osmoregulated periplasmic glucan (OPG) biosynthesis. Functionally, transfers a phosphoglycerol residue from phosphatidylglycerol to the membrane-bound nascent glucan backbones. The protein is Phosphoglycerol transferase I of Shigella flexneri.